The chain runs to 199 residues: Chaperone protein TorD (199 aa).

This sequence belongs to the TorD/DmsD family. TorD subfamily.

Its subcellular location is the cytoplasm. Its function is as follows. Involved in the biogenesis of TorA. Acts on TorA before the insertion of the molybdenum cofactor and, as a result, probably favors a conformation of the apoenzyme that is competent for acquiring the cofactor. This Escherichia coli (strain K12 / MC4100 / BW2952) protein is Chaperone protein TorD.